The sequence spans 212 residues: Holliday junction branch migration complex subunit RuvA (212 aa).

Residues 1-63 form a domain I region; the sequence is MIAKLKGLID…EDAISLFGFL (63 aa). The domain II stretch occupies residues 64–142; that stretch reads ETGERDWFRL…KIALGGFSPG (79 aa). Residues 143-155 form a flexible linker region; that stretch reads GIKDALSASAPLP. The interval 156–212 is domain III; that stretch reads AASGRMEDAVSALVNLGYKRLEAFQAVGETARELGDEADSSALIRAALKHLGKGLLG.

It belongs to the RuvA family. As to quaternary structure, homotetramer. Forms an RuvA(8)-RuvB(12)-Holliday junction (HJ) complex. HJ DNA is sandwiched between 2 RuvA tetramers; dsDNA enters through RuvA and exits via RuvB. An RuvB hexamer assembles on each DNA strand where it exits the tetramer. Each RuvB hexamer is contacted by two RuvA subunits (via domain III) on 2 adjacent RuvB subunits; this complex drives branch migration. In the full resolvosome a probable DNA-RuvA(4)-RuvB(12)-RuvC(2) complex forms which resolves the HJ.

It localises to the cytoplasm. Its function is as follows. The RuvA-RuvB-RuvC complex processes Holliday junction (HJ) DNA during genetic recombination and DNA repair, while the RuvA-RuvB complex plays an important role in the rescue of blocked DNA replication forks via replication fork reversal (RFR). RuvA specifically binds to HJ cruciform DNA, conferring on it an open structure. The RuvB hexamer acts as an ATP-dependent pump, pulling dsDNA into and through the RuvAB complex. HJ branch migration allows RuvC to scan DNA until it finds its consensus sequence, where it cleaves and resolves the cruciform DNA. This is Holliday junction branch migration complex subunit RuvA from Paramagnetospirillum magneticum (strain ATCC 700264 / AMB-1) (Magnetospirillum magneticum).